Here is a 527-residue protein sequence, read N- to C-terminus: MSNFVTLIEPLELTGSRVLRIAVAFAALCGATGLLAFSWWIYKQSSSKPTLPYPVVGDTHAQSLEKNLIKGMQQYRDSPFFLAGSRPPLLILPMSVFHEIHNMPNEYISIIVEHEDKFQGKYTHITTIRPEIPATIRQDLTRNMPNIILELQDELTYASDQWPRTSKWSSVSLYDMMLRTVALLSGRAFVGLPLCRDEGWLQASIGYTVQCVSIRDQLFTWSPVLRPIIGPFLPSVRSVRRHLRFAAEIMAPLISQALQDEKQHRADTLLADQTEGRGTFISWLLRHLPEELRTPEQVGLDQMLVSFAAIHTTTMALTKVVWELVKRPEYIEPLRTEMQDVFGPDAVSPDICINKEALSRLHKLDSFIREVQRWCPSTFVTPSRRVMKSMTLSNGIKLQRGTSIAFPAHAIHMSEETPTFSPDFSSDFENPSPRIFDGFRYLNLRSIKGQGSQHQAATTGPDYLIFNHGKHACPGRFFAISEIKMILIELLAKYDFRLEDGKPGPELMRVGTETRLDTKAGLEMRRR.

The chain crosses the membrane as a helical span at residues Ile-21 to Ile-41. Residue Cys-473 coordinates heme.

Belongs to the cytochrome P450 family. The cofactor is heme.

The protein resides in the membrane. It functions in the pathway plant hormone biosynthesis; gibberellin biosynthesis. Functionally, gibberellin 13-hydroxylase; part of the gene cluster that mediates the biosynthesis of gibberellins (GAs), diterpenoids that may provide a selective advantage during infection of the preferred host plant, rice. Gibberellins (GAs) are diterpenoids and are synthesized via the mevalonate pathway. Biosynthesis of the major metabolite GA3 (gibberellic acid) from geranylgeranyl diphosphate (GGPP) requires 13 steps. The GGPP produced by the geranylgeranyl diphosphate synthase GGS2 is converted to ent-kaurene via ent-copalyldiphosphate in a two-step cyclization reaction performed by the bifunctional ent-copalyl diphosphate synthase/ent-kaurene synthase enzyme (CPS/KS). Ent-Kaurene is metabolized to GAs by a series of oxidation reactions catalyzed by cytochrome P450 monooxygenases. Cytochrome P450 monooxygenase P450-4 is an ent-kaurene oxidase that catalyzes the three oxidation steps between ent-kaurene and ent-kaurenoic acid. The highly multifunctional cytochrome P450 monooxygenase P450-1 then catalyzes four steps involving oxidation at two carbon atoms, in the main pathway from ent-kaurenoic acid to GA14 via GA12-aldehyde as well as producing kaurenolides and fujenoic acids as by-products. The cytochrome P450 monooxygenase P450-2 then converts GA14 to GA4 by removal of C-20. GA4 is further converted to GA7 by the GA4 desaturase DES via 1,2-desaturation before cytochrome P450 monooxygenase P450-3, a 13-hydroxylase, hydroxylates GA7 to GA3, the final product of the GA-biosynthetic pathway. The chain is Cytochrome P450 monooygenase 3 from Gibberella fujikuroi (strain CBS 195.34 / IMI 58289 / NRRL A-6831) (Bakanae and foot rot disease fungus).